Reading from the N-terminus, the 528-residue chain is Pentatricopeptide repeat-containing protein At1g62914, mitochondrial (528 aa).

Residues 1–20 constitute a mitochondrion transit peptide; it reads MLAKISSSAKRFVHRSLVVR. 13 PPR repeats span residues 77–111, 112–146, 147–181, 182–216, 217–251, 252–286, 287–321, 322–356, 357–391, 392–426, 427–461, 462–496, and 497–528; these read SIIEFSKLLSAIAKMNKFDLVISFGEKMEILGISH, NLYTYNILINCFCRCSRLSLALALLGKMMKLGYEP, DIVTLNSLLNGFCHGNRISDAVALVDQMVEMGYKP, DTVTFTTLIHGLFLHNKASEAVALIDRMVQRGCQP, DLVTYGAVVNGLCKRGDTDLALNLLNKMEAAKIEA, NVVIYSTVIDSLCKYRHEDDALNLFTEMENKGVRP, NVITYSSLISCLCNYGRWSDASRLLSDMIERKINP, NLVTFSALIDAFVKKGKLVKAEKLYEEMIKRSIDP, NIFTYSSLINGFCMLDRLGEAKQMLELMIRKDCLP, NVVTYNTLINGFCKAKRVDKGMELFREMSQRGLVG, NTVTYTTLIHGFFQARDCDNAQMVFKQMVSVGVHP, NILTYNILLDGLCKNGKLAKAMVVFEYLQRSTMEP, and DIYTYNIMIEGMCKAGKWKMGGIYFVASALKE.

Belongs to the PPR family. P subfamily.

The protein resides in the mitochondrion. In Arabidopsis thaliana (Mouse-ear cress), this protein is Pentatricopeptide repeat-containing protein At1g62914, mitochondrial.